A 496-amino-acid chain; its full sequence is UDP-N-acetylmuramate--L-alanine ligase (496 aa).

Position 122 to 128 (122 to 128 (GTHGKTT)) interacts with ATP.

Belongs to the MurCDEF family.

Its subcellular location is the cytoplasm. The enzyme catalyses UDP-N-acetyl-alpha-D-muramate + L-alanine + ATP = UDP-N-acetyl-alpha-D-muramoyl-L-alanine + ADP + phosphate + H(+). The protein operates within cell wall biogenesis; peptidoglycan biosynthesis. Its function is as follows. Cell wall formation. The sequence is that of UDP-N-acetylmuramate--L-alanine ligase from Mycolicibacterium paratuberculosis (strain ATCC BAA-968 / K-10) (Mycobacterium paratuberculosis).